A 44-amino-acid chain; its full sequence is U2-agatoxin-Ao1s (44 aa).

The propeptide occupies 1 to 9 (KKVYSFLKL). Cystine bridges form between Cys12–Cys28, Cys19–Cys33, and Cys27–Cys43.

This sequence belongs to the neurotoxin 01 (U2-agtx) family. Expressed by the venom gland.

The protein localises to the secreted. Its function is as follows. Insect active toxin causing rapid but reversible paralysis in crickets. No activity shown in mammals. Does not show effect on mammalian voltage-gated calcium channels. The chain is U2-agatoxin-Ao1s from Agelena orientalis (Funnel-web spider).